The sequence spans 60 residues: Large ribosomal subunit protein uL30 (60 aa).

The protein belongs to the universal ribosomal protein uL30 family. In terms of assembly, part of the 50S ribosomal subunit.

This is Large ribosomal subunit protein uL30 from Shewanella sp. (strain ANA-3).